We begin with the raw amino-acid sequence, 643 residues long: Ecto-NOX disulfide-thiol exchanger 1 (643 aa).

Residues 142–221 enclose the RRM domain; the sequence is KTVFVGGLPE…GRLHVDFAQA (80 aa). Coiled coils occupy residues 307–342 and 425–570; these read VQSA…LTGI and QAYA…EALL.

The protein belongs to the ENOX family. Cu cation is required as a cofactor. As to expression, expressed in lymphocyte cells, breast and breast cancer (at protein level). Found in the sera of cancer patients with a wide variety of cancers including breast, prostate, lung and ovarian cancers, leukemias, and lymphomas. Found also in the serum of healthy volunteers or patients with disorders other than cancer. Probably shed into serum by cancer cells.

It is found in the cell membrane. It localises to the secreted. Its subcellular location is the extracellular space. With respect to regulation, not inhibited by the antitumor sulfonylurea LY181984, the vabilloid capsaicin, and retinoids. Its function is as follows. Probably acts as a terminal oxidase of plasma electron transport from cytosolic NAD(P)H via hydroquinones to acceptors at the cell surface. Hydroquinone oxidase activity alternates with a protein disulfide-thiol interchange/oxidoreductase activity which may control physical membrane displacements associated with vesicle budding or cell enlargement. The activities oscillate with a period length of 24 minutes and play a role in control of the ultradian cellular biological clock. The sequence is that of Ecto-NOX disulfide-thiol exchanger 1 (ENOX1) from Homo sapiens (Human).